The following is a 436-amino-acid chain: Proline transporter 3 (436 aa).

11 helical membrane-spanning segments follow: residues 29–49, 52–72, 118–138, 151–171, 172–192, 216–236, 254–274, 296–316, 345–365, 366–386, and 405–425; these read SWFQ…VLGY, TVMV…ATAI, LFMI…AVYV, FIAI…HLSA, LGIW…VAIV, LFTI…GMLP, LYFQ…IGYW, ALAN…FASP, GGYI…GDFM, SLTG…HMYY, and VVFF…LIAL.

Belongs to the amino acid/polyamine transporter 2 family. Amino acid/auxin permease (AAAP) (TC 2.A.18.3) subfamily. In terms of tissue distribution, expressed in epidermal cells of leaves, sepals and petals.

It localises to the cell membrane. In terms of biological role, proline transporter that mediates proline and glycine betaine transport. When expressed in a heterologous system (yeast), imports L-proline, glycine betaine and GABA across the plasma membrane. This is Proline transporter 3 (PROT3) from Arabidopsis thaliana (Mouse-ear cress).